A 502-amino-acid polypeptide reads, in one-letter code: Probable malate:quinone oxidoreductase (502 aa).

It belongs to the MQO family. FAD is required as a cofactor.

It carries out the reaction (S)-malate + a quinone = a quinol + oxaloacetate. The protein operates within carbohydrate metabolism; tricarboxylic acid cycle; oxaloacetate from (S)-malate (quinone route): step 1/1. This Oceanobacillus iheyensis (strain DSM 14371 / CIP 107618 / JCM 11309 / KCTC 3954 / HTE831) protein is Probable malate:quinone oxidoreductase.